A 296-amino-acid chain; its full sequence is Cytidine deaminase (296 aa).

2 CMP/dCMP-type deaminase domains span residues 48–168 (DVDA…FGPV) and 187–296 (QNVN…FIEE). Residue 89–91 (NME) participates in substrate binding. Residue histidine 102 participates in Zn(2+) binding. The Proton donor role is filled by glutamate 104. Residues cysteine 129 and cysteine 132 each contribute to the Zn(2+) site.

This sequence belongs to the cytidine and deoxycytidylate deaminase family. Homodimer. It depends on Zn(2+) as a cofactor.

It catalyses the reaction cytidine + H2O + H(+) = uridine + NH4(+). It carries out the reaction 2'-deoxycytidine + H2O + H(+) = 2'-deoxyuridine + NH4(+). This enzyme scavenges exogenous and endogenous cytidine and 2'-deoxycytidine for UMP synthesis. The sequence is that of Cytidine deaminase from Pectobacterium atrosepticum (strain SCRI 1043 / ATCC BAA-672) (Erwinia carotovora subsp. atroseptica).